Consider the following 860-residue polypeptide: Leucine--tRNA ligase (860 aa).

Positions 42 to 52 (PYPSGRLHMGH) match the 'HIGH' region motif. A 'KMSKS' region motif is present at residues 619–623 (KMSKS). Lysine 622 provides a ligand contact to ATP.

The protein belongs to the class-I aminoacyl-tRNA synthetase family.

It is found in the cytoplasm. The enzyme catalyses tRNA(Leu) + L-leucine + ATP = L-leucyl-tRNA(Leu) + AMP + diphosphate. The polypeptide is Leucine--tRNA ligase (Shigella sonnei (strain Ss046)).